The chain runs to 61 residues: uncharacterized protein (61 aa).

This is an uncharacterized protein from Rickettsia conorii (strain ATCC VR-613 / Malish 7).